The primary structure comprises 190 residues: Small ribosomal subunit protein uS7 (190 aa).

Thr2 carries the post-translational modification N-acetylthreonine.

The protein belongs to the universal ribosomal protein uS7 family. Component of the small ribosomal subunit. Part of the small subunit (SSU) processome, composed of more than 70 proteins and the RNA chaperone small nucleolar RNA (snoRNA) U3.

Its subcellular location is the cytoplasm. It localises to the nucleus. The protein localises to the nucleolus. Functionally, component of the small ribosomal subunit. The ribosome is a large ribonucleoprotein complex responsible for the synthesis of proteins in the cell. Part of the small subunit (SSU) processome, first precursor of the small eukaryotic ribosomal subunit. During the assembly of the SSU processome in the nucleolus, many ribosome biogenesis factors, an RNA chaperone and ribosomal proteins associate with the nascent pre-rRNA and work in concert to generate RNA folding, modifications, rearrangements and cleavage as well as targeted degradation of pre-ribosomal RNA by the RNA exosome. The polypeptide is Small ribosomal subunit protein uS7 (rps5) (Dictyostelium discoideum (Social amoeba)).